Reading from the N-terminus, the 1843-residue chain is Nonribosomal peptide synthetase SIDD (1843 aa).

The tract at residues M1 to S83 is disordered. Positions Q65–Q81 are enriched in low complexity. Residues T133–C528 are adenylation 1. The tract at residues K628–E647 is disordered. Residues E641–S716 form the Carrier 1 domain. At S677 the chain carries O-(pantetheine 4'-phosphoryl)serine. The tract at residues V753–L1175 is condensation 1. Positions S1289–D1365 constitute a Carrier 2 domain. S1326 is subject to O-(pantetheine 4'-phosphoryl)serine. The interval F1447–L1734 is condensation 2.

The protein belongs to the NRP synthetase family. It depends on pantetheine 4'-phosphate as a cofactor.

The protein operates within siderophore biosynthesis. Its function is as follows. Nonribosomal peptide synthetase; part of the gene cluster that mediates the biosynthesis of at least 11 siderophores, including beauverichelin A, dimerumic acid (DA), Na-dimethyl coprogen (NADC), eleutherazine B, ferricrocin (FC), fusarinine A, fusarinine C (FsC), metachelin A, mevalonolactone, rhodotorulic acid (RA) and tenellin. This cocktail of siderophores for iron metabolism is essential for virulence, and more specifically for the fungal virulence in penetrating through the host cuticle. Siderophore synthesis is also involved in conidial germination under iron-deficient conditions. SIDC catalyzes the assembly of ferricrocin whereas SIDD catalyzes the assembly of fusarinine C. This chain is Nonribosomal peptide synthetase SIDD, found in Beauveria bassiana (strain ARSEF 2860) (White muscardine disease fungus).